The following is a 407-amino-acid chain: uncharacterized protein (407 aa).

Residues 1–27 (MRILAMTRAHNAGRTLAATLDSLAVFS) form the signal peptide.

This is an uncharacterized protein from Mycobacterium bovis (strain ATCC BAA-935 / AF2122/97).